The primary structure comprises 181 residues: 3-hydroxyacyl-[acyl-carrier-protein] dehydratase FabZ (181 aa).

The active site involves His-54.

It belongs to the thioester dehydratase family. FabZ subfamily.

It is found in the cytoplasm. It carries out the reaction a (3R)-hydroxyacyl-[ACP] = a (2E)-enoyl-[ACP] + H2O. In terms of biological role, involved in unsaturated fatty acids biosynthesis. Catalyzes the dehydration of short chain beta-hydroxyacyl-ACPs and long chain saturated and unsaturated beta-hydroxyacyl-ACPs. The chain is 3-hydroxyacyl-[acyl-carrier-protein] dehydratase FabZ from Yersinia pestis.